Consider the following 126-residue polypeptide: Adenosine 5'-monophosphoramidase HINT1 (126 aa).

Alanine 2 is modified (N-acetylalanine). The HIT domain maps to 18–126; it reads IFGKIIRKEI…GGRQMHWPPG (109 aa). Lysine 21 and lysine 30 each carry N6-acetyllysine. 43-44 is a binding site for AMP; the sequence is DI. Phosphoserine occurs at positions 45 and 72. AMP-binding positions include asparagine 99, 105–107, and 112–114; these read GQS and HLH. Residues 110 to 114 carry the Histidine triad motif motif; it reads HVHLH. Residue histidine 112 is the Tele-AMP-histidine intermediate of the active site.

It belongs to the HINT family. Homodimer. Interacts with CDK7. Interacts with RUVBL1 and RUVBL2 and is associated with the LEF1/TCF1-CTNNB1 complex and with a KAT5 histone acetyltransferase complex. Identified in a complex with MITF and CTNNB1. Interacts with CDC34 and RBX1, and is part of a SCF (SKP2-CUL1-F-box protein) E3 ubiquitin-protein ligase complex. Interacts with SUMO1, SUMO2 and RGS17. Interacts with the Ten-1 ICD form of TENM1. Interacts with CALM1; interaction increases in the presence of calcium ions. In terms of tissue distribution, widely expressed.

The protein localises to the cytoplasm. It is found in the nucleus. The catalysed reaction is adenosine 5'-phosphoramidate + H2O = AMP + NH4(+). Functionally, exhibits adenosine 5'-monophosphoramidase activity, hydrolyzing purine nucleotide phosphoramidates with a single phosphate group such as adenosine 5'monophosphoramidate (AMP-NH2) to yield AMP and NH2. Hydrolyzes adenosine 5'monophosphomorpholidate (AMP-morpholidate) and guanosine 5'monophosphomorpholidate (GMP-morpholidate). Hydrolyzes lysyl-AMP (AMP-N-epsilon-(N-alpha-acetyl lysine methyl ester)) generated by lysine tRNA ligase, as well as Met-AMP, His-AMP and Asp-AMP, lysyl-GMP (GMP-N-epsilon-(N-alpha-acetyl lysine methyl ester)) and AMP-N-alanine methyl ester. Hydrolyzes 3-indolepropionic acyl-adenylate, tryptamine adenosine phosphoramidate monoester and other fluorogenic purine nucleoside tryptamine phosphoramidates in vitro. Can also convert adenosine 5'-O-phosphorothioate and guanosine 5'-O-phosphorothioate to the corresponding nucleoside 5'-O-phosphates with concomitant release of hydrogen sulfide. In addition, functions as scaffolding protein that modulates transcriptional activation by the LEF1/TCF1-CTNNB1 complex and by the complex formed with MITF and CTNNB1. Modulates p53/TP53 levels and p53/TP53-mediated apoptosis. Modulates proteasomal degradation of target proteins by the SCF (SKP2-CUL1-F-box protein) E3 ubiquitin-protein ligase complex. Also exhibits SUMO-specific isopeptidase activity, deconjugating SUMO1 from RGS17. Deconjugates SUMO1 from RANGAP1. The polypeptide is Adenosine 5'-monophosphoramidase HINT1 (HINT1) (Homo sapiens (Human)).